The primary structure comprises 1042 residues: Glutamate dehydrogenase 2 (1042 aa).

The active site involves K596. R763 carries the ADP-ribosylarginine; by Legionella Lart1 modification.

The protein belongs to the Glu/Leu/Phe/Val dehydrogenases family. In terms of assembly, homodimer. In terms of processing, (Microbial infection) ADP-ribosylated at Arg-763 by the Legionella pneumophila effector Lart1, which inhibits the glutamate dehydrogenase activity. Amoeba are natural hosts of Legionella, and ADP-ribosylation by Lart1 may promote Legionella parasitism.

The protein localises to the cytoplasm. It catalyses the reaction L-glutamate + NAD(+) + H2O = 2-oxoglutarate + NH4(+) + NADH + H(+). Its activity is regulated as follows. Activity is stimulated by AMP. With respect to regulation, (Microbial infection) Inhibited by ADP-ribosylation. The polypeptide is Glutamate dehydrogenase 2 (glud2) (Dictyostelium discoideum (Social amoeba)).